Here is a 122-residue protein sequence, read N- to C-terminus: Large ribosomal subunit protein uL14c (122 aa).

This sequence belongs to the universal ribosomal protein uL14 family. As to quaternary structure, part of the 50S ribosomal subunit.

The protein resides in the plastid. It localises to the chloroplast. Functionally, binds to 23S rRNA. This chain is Large ribosomal subunit protein uL14c, found in Staurastrum punctulatum (Green alga).